The following is a 582-amino-acid chain: TRAF-type zinc finger domain-containing protein 1 (582 aa).

Residue A2 is modified to N-acetylalanine. The TRAF-type zinc finger occupies 27-103 (IHEIHCQRNI…DLELSILKLK (77 aa)). Phosphoserine is present on S191. Residues 216–238 (EEQERQERNRGQQPPKEGGEDGA) are disordered. S278, S320, S326, S327, S409, S415, S430, and S470 each carry phosphoserine. Disordered stretches follow at residues 402-509 (EGIP…IAPG) and 522-582 (PENI…EEEE). Polar residues-rich tracts occupy residues 454 to 471 (PFNN…STSG) and 486 to 504 (LNNS…SQNG).

Interacts with MAVS, TICAM1, TRAF1, TRAF2, TRAF3 and TRAF6.

Negative feedback regulator that controls excessive innate immune responses. Regulates both Toll-like receptor 4 (TLR4) and DDX58/RIG1-like helicases (RLH) pathways. May inhibit the LTR pathway by direct interaction with TRAF6 and attenuation of NF-kappa-B activation. May negatively regulate the RLH pathway downstream from MAVS and upstream of NF-kappa-B and IRF3. This chain is TRAF-type zinc finger domain-containing protein 1 (TRAFD1), found in Macaca fascicularis (Crab-eating macaque).